The chain runs to 87 residues: uncharacterized protein (87 aa).

This is an uncharacterized protein from Escherichia coli.